The following is a 324-amino-acid chain: Zinc transporter ZIP1 (324 aa).

At 1–30 (MGPWGEPELLVWRPEAVASEPSVPVGLEVK) the chain is on the extracellular side. A helical transmembrane segment spans residues 31–51 (LGALVLLLLLTLICSLVPVCV). Residues 52–68 (LRRSGANHEASASGQKA) lie on the Cytoplasmic side of the membrane. The chain crosses the membrane as a helical span at residues 69 to 89 (LSLVSCFAGGVFLATCLLDLL). Residues 90–104 (PDYLAAIDEALEALH) are Extracellular-facing. Residues 105–125 (VTLQFPLQEFILAMGFFLVLV) form a helical membrane-spanning segment. Residues 126–179 (MEQITLAYKEQTSPPHPEETRALLGTVNGGPQHWHDGPGIPQAGGTPAAPSALR) lie on the Cytoplasmic side of the membrane. A helical transmembrane segment spans residues 180–200 (ACVLVFSLALHSVFEGLAVGL). Topologically, residues 201-206 (QRDRAR) are extracellular. A helical membrane pass occupies residues 207-227 (AMELCLALLLHKGILAVSLSL). Residues 228–237 (RLLQSHLRVQ) lie on the Cytoplasmic side of the membrane. The chain crosses the membrane as a helical span at residues 238–258 (VVAGCGILFSCMTPLGIGLGA). The Extracellular segment spans residues 259-272 (ALAESAGPLHQLAQ). A helical membrane pass occupies residues 273–293 (SVLEGMAAGTFLYITFLEILP). At 294–303 (QELATSEQRI) the chain is on the cytoplasmic side. A helical transmembrane segment spans residues 304-324 (LKVILLLAGFALLTGLLFVQI).

The protein belongs to the ZIP transporter (TC 2.A.5) family. As to expression, ubiquitous, except in the pancreas. Highest levels seen in kidney, salivary gland and placenta.

The protein resides in the cell membrane. It localises to the endoplasmic reticulum membrane. The catalysed reaction is Zn(2+)(in) = Zn(2+)(out). Functionally, transporter for the divalent cation Zn(2+). Mediates the influx of Zn(2+) into cells from extracellular space. This is Zinc transporter ZIP1 (Slc39a1) from Mus musculus (Mouse).